The primary structure comprises 272 residues: Petrobactin import ATP-binding protein FpuC (272 aa).

The ABC transporter domain maps to 2 to 238; sequence ISVNKVFYAH…EMFQHIFGIE (237 aa). An ATP-binding site is contributed by 34–41; that stretch reads GPNGSGKS.

The protein belongs to the ABC transporter superfamily. The complex is composed of two ATP-binding proteins (FpuC), two transmembrane proteins (FpuB) and a solute-binding protein (FpuA).

The protein resides in the cell membrane. The enzyme catalyses a Fe(III)-siderophore(out) + ATP + H2O = a Fe(III)-siderophore(in) + ADP + phosphate + H(+). Its function is as follows. Part of an ABC transporter complex involved in ferric-petrobactin uptake. Probably responsible for energy coupling to the transport system. The sequence is that of Petrobactin import ATP-binding protein FpuC from Bacillus anthracis.